The following is a 494-amino-acid chain: Probable cytosol aminopeptidase (494 aa).

Residues lysine 260 and aspartate 265 each coordinate Mn(2+). Lysine 272 is a catalytic residue. 3 residues coordinate Mn(2+): aspartate 283, aspartate 342, and glutamate 344. Residue arginine 346 is part of the active site.

This sequence belongs to the peptidase M17 family. Mn(2+) serves as cofactor.

It is found in the cytoplasm. It carries out the reaction Release of an N-terminal amino acid, Xaa-|-Yaa-, in which Xaa is preferably Leu, but may be other amino acids including Pro although not Arg or Lys, and Yaa may be Pro. Amino acid amides and methyl esters are also readily hydrolyzed, but rates on arylamides are exceedingly low.. The enzyme catalyses Release of an N-terminal amino acid, preferentially leucine, but not glutamic or aspartic acids.. Functionally, presumably involved in the processing and regular turnover of intracellular proteins. Catalyzes the removal of unsubstituted N-terminal amino acids from various peptides. This Bacillus anthracis (strain CDC 684 / NRRL 3495) protein is Probable cytosol aminopeptidase.